Here is a 318-residue protein sequence, read N- to C-terminus: NADH-ubiquinone oxidoreductase chain 1 (318 aa).

8 helical membrane passes run 2 to 22 (FMIN…FLTL), 70 to 90 (MFII…SPLP), 100 to 120 (LGVL…LWSG), 136 to 156 (VAQT…VLLM), 172 to 192 (LWLL…TLAE), 222 to 242 (LFFL…AILF), 253 to 273 (ELYT…FLWI), and 294 to 314 (LPLT…TASI).

Belongs to the complex I subunit 1 family. As to quaternary structure, core subunit of respiratory chain NADH dehydrogenase (Complex I) which is composed of 45 different subunits.

The protein localises to the mitochondrion inner membrane. It carries out the reaction a ubiquinone + NADH + 5 H(+)(in) = a ubiquinol + NAD(+) + 4 H(+)(out). Core subunit of the mitochondrial membrane respiratory chain NADH dehydrogenase (Complex I) which catalyzes electron transfer from NADH through the respiratory chain, using ubiquinone as an electron acceptor. Essential for the catalytic activity and assembly of complex I. In Balaenoptera musculus (Blue whale), this protein is NADH-ubiquinone oxidoreductase chain 1 (MT-ND1).